The following is a 485-amino-acid chain: Aspartyl/glutamyl-tRNA(Asn/Gln) amidotransferase subunit B (485 aa).

Belongs to the GatB/GatE family. GatB subfamily. In terms of assembly, heterotrimer of A, B and C subunits.

The enzyme catalyses L-glutamyl-tRNA(Gln) + L-glutamine + ATP + H2O = L-glutaminyl-tRNA(Gln) + L-glutamate + ADP + phosphate + H(+). It catalyses the reaction L-aspartyl-tRNA(Asn) + L-glutamine + ATP + H2O = L-asparaginyl-tRNA(Asn) + L-glutamate + ADP + phosphate + 2 H(+). Functionally, allows the formation of correctly charged Asn-tRNA(Asn) or Gln-tRNA(Gln) through the transamidation of misacylated Asp-tRNA(Asn) or Glu-tRNA(Gln) in organisms which lack either or both of asparaginyl-tRNA or glutaminyl-tRNA synthetases. The reaction takes place in the presence of glutamine and ATP through an activated phospho-Asp-tRNA(Asn) or phospho-Glu-tRNA(Gln). The chain is Aspartyl/glutamyl-tRNA(Asn/Gln) amidotransferase subunit B from Methylacidiphilum infernorum (isolate V4) (Methylokorus infernorum (strain V4)).